The sequence spans 219 residues: Inner membrane protein YccA (219 aa).

Residues 1-22 (MDRIVSSSHDRTSLLSTHKVLR) are Periplasmic-facing. The next 2 membrane-spanning stretches (helical) occupy residues 23–43 (NTYF…TAST) and 44–64 (VLML…GLMF). The Periplasmic portion of the chain corresponds to 65–73 (LTYKTANKP). A helical transmembrane segment spans residues 74 to 94 (TGIISAFAFTGFLGYILGPIL). The Cytoplasmic portion of the chain corresponds to 95–104 (NTYLSAGMGD). Residues 105–125 (VIAMALGGTALVFFCCSAYVL) traverse the membrane as a helical segment. Topologically, residues 126–133 (TTRKDMSF) are periplasmic. The helical transmembrane segment at 134–154 (LGGMLMAGIVVVLIGMVANIF) threads the bilayer. Residues 155 to 157 (LQL) lie on the Cytoplasmic side of the membrane. A helical transmembrane segment spans residues 158–178 (PALHLAISAVFILISSGAILF). The Periplasmic portion of the chain corresponds to 179-195 (ETSNIIHGGETNYIRAT). A helical membrane pass occupies residues 196–216 (VSLYVSLYNIFVSLLSILGFA). At 217–219 (SRD) the chain is on the cytoplasmic side.

Belongs to the BI1 family.

The protein localises to the cell inner membrane. The protein is Inner membrane protein YccA (yccA) of Escherichia coli O6:H1 (strain CFT073 / ATCC 700928 / UPEC).